We begin with the raw amino-acid sequence, 75 residues long: U-stichotoxin-Hau3a (75 aa).

An N-terminal signal peptide occupies residues 1 to 19 (MNHLIILVVAAVFLGMASA). Residues 20–26 (EDVFHKR) constitute a propeptide that is removed on maturation. 3 cysteine pairs are disulfide-bonded: C31–C71, C33–C61, and C54–C72.

Belongs to the sea anemone sodium channel inhibitory toxin family. Type I subfamily. Post-translationally, contains 3 disulfide bonds.

It localises to the secreted. Its subcellular location is the nematocyst. Its function is as follows. Toxin that is lethal to crab. The protein is U-stichotoxin-Hau3a of Heteractis aurora (Banded sea anemone).